Here is a 152-residue protein sequence, read N- to C-terminus: Cell division protein SepF (152 aa).

The interval Glu-21–Leu-56 is disordered. The span at Glu-26 to Gln-40 shows a compositional bias: basic and acidic residues.

The protein belongs to the SepF family. As to quaternary structure, homodimer. Interacts with FtsZ.

Its subcellular location is the cytoplasm. In terms of biological role, cell division protein that is part of the divisome complex and is recruited early to the Z-ring. Probably stimulates Z-ring formation, perhaps through the cross-linking of FtsZ protofilaments. Its function overlaps with FtsA. In Bacillus velezensis (strain DSM 23117 / BGSC 10A6 / LMG 26770 / FZB42) (Bacillus amyloliquefaciens subsp. plantarum), this protein is Cell division protein SepF.